Here is a 338-residue protein sequence, read N- to C-terminus: Sesquiterpene synthase 2 (338 aa).

The Mg(2+) site is built by Asp93, Asn228, Ser232, and Glu236. Positions 93–97 (DNISD) match the DDXXD motif motif. Positions 228–236 (NDIFSYNVE) match the NSE/DTE motif motif. The (2E,6E)-farnesyl diphosphate site is built by Arg316 and Tyr317.

This sequence belongs to the terpene synthase family. The cofactor is Mg(2+).

It catalyses the reaction (2E,6E)-farnesyl diphosphate = alpha-copaene + diphosphate. The catalysed reaction is (2E,6E)-farnesyl diphosphate = beta-copaene + diphosphate. It carries out the reaction (2E,6E)-farnesyl diphosphate = alpha-muurolene + diphosphate. The enzyme catalyses (2E,6E)-farnesyl diphosphate = gamma-muurolene + diphosphate. It catalyses the reaction (2E,6E)-farnesyl diphosphate = delta-cadinene + diphosphate. In terms of biological role, terpene cyclase that catalyzes the cyclization of farnesyl diphosphate (FPP) to various sesquiterpenes, including alpha-copaene, beta-copaene, beta-elemene, alpha-muurolene, gamma-muurolene and delta-cadinene. This is Sesquiterpene synthase 2 from Postia placenta (strain ATCC 44394 / Madison 698-R) (Brown rot fungus).